The sequence spans 591 residues: L-fucose isomerase (591 aa).

Residues E337 and D361 each act as proton acceptor in the active site. Mn(2+) contacts are provided by E337, D361, and H528.

Belongs to the L-fucose isomerase family. In terms of assembly, homohexamer. The cofactor is Mn(2+).

Its subcellular location is the cytoplasm. The catalysed reaction is L-fucose = L-fuculose. It functions in the pathway carbohydrate degradation; L-fucose degradation; L-lactaldehyde and glycerone phosphate from L-fucose: step 1/3. Functionally, converts the aldose L-fucose into the corresponding ketose L-fuculose. This Salmonella paratyphi A (strain ATCC 9150 / SARB42) protein is L-fucose isomerase.